Consider the following 147-residue polypeptide: MKVILLKDVKGKGKKGEVINASDGYARNFLLPRGLGEEATDSNMHILNRQKEAERKKKLEETEAAQALAESLRNKELKMIGKAGENGRLFGAITNKDIATELKKQFKVDIDKKKVVTETIKQLGEYEVELKLYPEISTKIKVIISEK.

It belongs to the bacterial ribosomal protein bL9 family.

Binds to the 23S rRNA. The protein is Large ribosomal subunit protein bL9 of Clostridium novyi (strain NT).